The sequence spans 359 residues: Mannonate dehydratase (359 aa).

This sequence belongs to the mannonate dehydratase family. Fe(2+) serves as cofactor. Requires Mn(2+) as cofactor.

It carries out the reaction D-mannonate = 2-dehydro-3-deoxy-D-gluconate + H2O. It functions in the pathway carbohydrate metabolism; pentose and glucuronate interconversion. Its function is as follows. Catalyzes the dehydration of D-mannonate. In Bacillus subtilis (strain 168), this protein is Mannonate dehydratase (uxuA).